The following is a 443-amino-acid chain: Exodeoxyribonuclease 7 large subunit (443 aa).

This sequence belongs to the XseA family. As to quaternary structure, heterooligomer composed of large and small subunits.

Its subcellular location is the cytoplasm. It carries out the reaction Exonucleolytic cleavage in either 5'- to 3'- or 3'- to 5'-direction to yield nucleoside 5'-phosphates.. In terms of biological role, bidirectionally degrades single-stranded DNA into large acid-insoluble oligonucleotides, which are then degraded further into small acid-soluble oligonucleotides. The polypeptide is Exodeoxyribonuclease 7 large subunit (Vibrio campbellii (strain ATCC BAA-1116)).